We begin with the raw amino-acid sequence, 193 residues long: Potassium-transporting ATPase KdpC subunit (193 aa).

A helical transmembrane segment spans residues proline 7–methionine 27.

Belongs to the KdpC family. In terms of assembly, the system is composed of three essential subunits: KdpA, KdpB and KdpC.

It localises to the cell inner membrane. Functionally, part of the high-affinity ATP-driven potassium transport (or Kdp) system, which catalyzes the hydrolysis of ATP coupled with the electrogenic transport of potassium into the cytoplasm. This subunit acts as a catalytic chaperone that increases the ATP-binding affinity of the ATP-hydrolyzing subunit KdpB by the formation of a transient KdpB/KdpC/ATP ternary complex. The chain is Potassium-transporting ATPase KdpC subunit from Burkholderia cenocepacia (strain HI2424).